The chain runs to 267 residues: Cilia- and flagella-associated protein 300 (267 aa).

Belongs to the CFAP300 family. Interacts with DNAAF2. Expressed in nasal epithelial cells.

It is found in the cytoplasm. It localises to the cytoskeleton. Its subcellular location is the cilium axoneme. In terms of biological role, cilium- and flagellum-specific protein that plays a role in axonemal structure organization and motility. May play a role in outer and inner dynein arm assembly. The polypeptide is Cilia- and flagella-associated protein 300 (Homo sapiens (Human)).